Reading from the N-terminus, the 218-residue chain is Adenylate kinase (218 aa).

10–15 is an ATP binding site; it reads GAGKGT. An NMP region spans residues 30 to 59; the sequence is STGDMLRAAIAKGTPLGLSAQKIMESGGLV. Residues threonine 31, arginine 36, 57–59, 85–88, and glutamine 92 each bind AMP; these read GLV and GFPR. The tract at residues 122–159 is LID; sequence GRRIHQPSGRVYHVVNQPPKNPGVDDITGEPLIQRDDD. Residues arginine 123 and 132-133 contribute to the ATP site; that span reads VY. AMP-binding residues include arginine 156 and arginine 167. Glycine 203 is an ATP binding site.

The protein belongs to the adenylate kinase family. In terms of assembly, monomer.

The protein resides in the cytoplasm. The catalysed reaction is AMP + ATP = 2 ADP. Its pathway is purine metabolism; AMP biosynthesis via salvage pathway; AMP from ADP: step 1/1. In terms of biological role, catalyzes the reversible transfer of the terminal phosphate group between ATP and AMP. Plays an important role in cellular energy homeostasis and in adenine nucleotide metabolism. The polypeptide is Adenylate kinase (Legionella pneumophila (strain Corby)).